Reading from the N-terminus, the 113-residue chain is Ig heavy chain V region 36-60 (113 aa).

This Mus musculus (Mouse) protein is Ig heavy chain V region 36-60.